Here is a 118-residue protein sequence, read N- to C-terminus: Large ribosomal subunit protein bL20 (118 aa).

The protein belongs to the bacterial ribosomal protein bL20 family.

Its function is as follows. Binds directly to 23S ribosomal RNA and is necessary for the in vitro assembly process of the 50S ribosomal subunit. It is not involved in the protein synthesizing functions of that subunit. The sequence is that of Large ribosomal subunit protein bL20 from Yersinia enterocolitica serotype O:8 / biotype 1B (strain NCTC 13174 / 8081).